A 393-amino-acid chain; its full sequence is HORMA domain-containing protein 1 (393 aa).

An HORMA domain is found at 24–226 (QQSLVLVKRL…TPFHTFKVKV (203 aa)). Positions 322 to 393 (SKTSELDVSE…RKFSEPKERI (72 aa)) are disordered. The span at 352–361 (KSKENRKRTQ) shows a compositional bias: basic and acidic residues. Serine 375 is modified (phosphoserine). A Nuclear localization signal motif is present at residues 382–385 (KRRK).

In terms of assembly, interacts with HORMAD2. Interacts with IHO1. In terms of processing, phosphorylated at Ser-376 in a SPO11-dependent manner.

The protein localises to the nucleus. The protein resides in the chromosome. In terms of biological role, plays a key role in meiotic progression. Regulates 3 different functions during meiosis: ensures that sufficient numbers of processed DNA double-strand breaks (DSBs) are available for successful homology search by increasing the steady-state numbers of single-stranded DSB ends. Promotes synaptonemal-complex formation independently of its role in homology search. Plays a key role in the male mid-pachytene checkpoint and the female meiotic prophase checkpoint: required for efficient build-up of ATR activity on unsynapsed chromosome regions, a process believed to form the basis of meiotic silencing of unsynapsed chromatin (MSUC) and meiotic prophase quality control in both sexes. The protein is HORMA domain-containing protein 1 (HORMAD1) of Bos taurus (Bovine).